The chain runs to 115 residues: Large ribosomal subunit protein bL19 (115 aa).

It belongs to the bacterial ribosomal protein bL19 family.

Its function is as follows. This protein is located at the 30S-50S ribosomal subunit interface and may play a role in the structure and function of the aminoacyl-tRNA binding site. This chain is Large ribosomal subunit protein bL19, found in Lactobacillus delbrueckii subsp. bulgaricus (strain ATCC BAA-365 / Lb-18).